The following is a 380-amino-acid chain: Queuine tRNA-ribosyltransferase (380 aa).

Catalysis depends on Asp-96, which acts as the Proton acceptor. Residues 96–100 (DSGGF), Asp-150, Gln-193, and Gly-220 contribute to the substrate site. The segment at 251-257 (GVGAPDS) is RNA binding. Asp-270 functions as the Nucleophile in the catalytic mechanism. Residues 275–279 (TRIAR) form an RNA binding; important for wobble base 34 recognition region. 4 residues coordinate Zn(2+): Cys-308, Cys-310, Cys-313, and His-339.

The protein belongs to the queuine tRNA-ribosyltransferase family. Homodimer. Within each dimer, one monomer is responsible for RNA recognition and catalysis, while the other monomer binds to the replacement base PreQ1. Zn(2+) is required as a cofactor.

The enzyme catalyses 7-aminomethyl-7-carbaguanine + guanosine(34) in tRNA = 7-aminomethyl-7-carbaguanosine(34) in tRNA + guanine. Its pathway is tRNA modification; tRNA-queuosine biosynthesis. Functionally, catalyzes the base-exchange of a guanine (G) residue with the queuine precursor 7-aminomethyl-7-deazaguanine (PreQ1) at position 34 (anticodon wobble position) in tRNAs with GU(N) anticodons (tRNA-Asp, -Asn, -His and -Tyr). Catalysis occurs through a double-displacement mechanism. The nucleophile active site attacks the C1' of nucleotide 34 to detach the guanine base from the RNA, forming a covalent enzyme-RNA intermediate. The proton acceptor active site deprotonates the incoming PreQ1, allowing a nucleophilic attack on the C1' of the ribose to form the product. After dissociation, two additional enzymatic reactions on the tRNA convert PreQ1 to queuine (Q), resulting in the hypermodified nucleoside queuosine (7-(((4,5-cis-dihydroxy-2-cyclopenten-1-yl)amino)methyl)-7-deazaguanosine). The polypeptide is Queuine tRNA-ribosyltransferase (Streptococcus uberis (strain ATCC BAA-854 / 0140J)).